The primary structure comprises 146 residues: Large ribosomal subunit protein uL15 (146 aa).

The interval Met-1–Arg-46 is disordered. Residues Lys-9–Gly-19 are compositionally biased toward basic residues. Over residues Arg-20 to Ser-30 the composition is skewed to gly residues.

It belongs to the universal ribosomal protein uL15 family. As to quaternary structure, part of the 50S ribosomal subunit.

Its function is as follows. Binds to the 23S rRNA. The chain is Large ribosomal subunit protein uL15 from Phytoplasma mali (strain AT).